The sequence spans 393 residues: MSEKEGKVIPETNGMKRPRFDPVKLGLPEEFTLTDYTRLKGCSCKVPQPELLALLQSVSTTPGRRDVGMDCSIVKLQHKDETGKPLYMVSTTDFFFPSVEDPYLQGQIGAANVLSDLYSTGIDRCDTVLMLLAASTDMDKTEREVCTQEMMKGFVDHVRLAGSDVTGGQTVMNPWPLIGGIATSVVAESQMIRPTGLQPGDILVLTKPLGCQIAVNLKQWLRRPSPIFEEQIQGKMDSEEIEELYNAAADGMKRLNRMAAALMHSHGAHGATDVTGFGILGHAKNLGSAQKADVCLVLDSLPMYRGAVKASKLMGDKYRLFEGYAAETSGGLLVAFGTREEAEGYIRELYETDGEPAWVVGRVVRREGSAPYALLQKDYKIIEVGAKVNDKII.

The tract at residues methionine 1–aspartate 21 is disordered. The active site involves cysteine 42. Residues lysine 45, glycine 68 to aspartate 70, aspartate 93, aspartate 116, and glycine 167 to threonine 170 each bind ATP. Aspartate 70 lines the Mg(2+) pocket. A Mg(2+)-binding site is contributed by aspartate 116. Position 273 (aspartate 273) interacts with Mg(2+).

The protein belongs to the selenophosphate synthase 1 family. Class I subfamily. In terms of assembly, homodimer. Requires Mg(2+) as cofactor.

The enzyme catalyses hydrogenselenide + ATP + H2O = selenophosphate + AMP + phosphate + 2 H(+). Functionally, synthesizes selenophosphate from selenide and ATP. This Trypanosoma brucei brucei (strain 927/4 GUTat10.1) protein is Selenide, water dikinase.